A 422-amino-acid polypeptide reads, in one-letter code: Target of rapamycin complex 2 subunit bit61 (422 aa).

The span at 48-69 (VTTKESNVGDSDTTENIKSPFN) shows a compositional bias: polar residues. Residues 48–101 (VTTKESNVGDSDTTENIKSPFNGQWPFSRRSSQSSSHPVFEETHWSKHSKRPGK) are disordered. 3 positions are modified to phosphoserine: serine 109, serine 132, and serine 201.

This sequence belongs to the BIT61 family. As to quaternary structure, the target of rapamycin complex 2 (TORC2) is composed of at least bit61, pop3/wat1, sin1, ste20 and tor1. Post-translationally, either Thr-23, Thr-25 or Ser-26 and Ser-78 or Ser-79 are phosphorylated as well.

Its subcellular location is the cytoplasm. The protein localises to the nucleus. Functionally, component of TORC2, which regulates multiple cellular processes to control cell growth in response to environmental signals. TORC2 is required for cell survival under various stress conditions. TORC2 positively controls G1 cell-cycle arrest, sexual development and amino acid uptake. Positively regulates amino acid uptake through the control of expression of amino acid permeases. The polypeptide is Target of rapamycin complex 2 subunit bit61 (Schizosaccharomyces pombe (strain 972 / ATCC 24843) (Fission yeast)).